The sequence spans 159 residues: Ribosomal RNA large subunit methyltransferase H (159 aa).

Residues Leu76, Gly108, and 127–132 (FSHMTF) each bind S-adenosyl-L-methionine.

Belongs to the RNA methyltransferase RlmH family. As to quaternary structure, homodimer.

It is found in the cytoplasm. It carries out the reaction pseudouridine(1915) in 23S rRNA + S-adenosyl-L-methionine = N(3)-methylpseudouridine(1915) in 23S rRNA + S-adenosyl-L-homocysteine + H(+). In terms of biological role, specifically methylates the pseudouridine at position 1915 (m3Psi1915) in 23S rRNA. The sequence is that of Ribosomal RNA large subunit methyltransferase H from Halothermothrix orenii (strain H 168 / OCM 544 / DSM 9562).